Reading from the N-terminus, the 207-residue chain is Sodium/potassium-transporting ATPase subunit beta-1-interacting protein 1 (207 aa).

Helical transmembrane passes span 2–22 (GKCS…VAAL), 35–55 (APIL…FGTV), and 62–82 (LILY…IICF). N100 carries an N-linked (GlcNAc...) asparagine glycan. The chain crosses the membrane as a helical span at residues 147–167 (ALSSALQIFLALFGFVFACYV).

This sequence belongs to the NKAIN family. Interacts with ATP1B1 C-terminus. Detected in the brain only and specifically in neurons. Expressed in multiple regions such as cerebral cortex, thalamus, hippocampus, olfactory bulb and brainstem as well as in cerebellum with high expression in granular cell layer.

The protein localises to the cell membrane. This chain is Sodium/potassium-transporting ATPase subunit beta-1-interacting protein 1 (Nkain1), found in Mus musculus (Mouse).